The sequence spans 200 residues: MNVYKRADFWAKKAAAAGYRARSVYKLAALDKKYSLLSRASRVLDLGAAPGSWTQYVLGTAAACTAVCAVDVQPIASDIQDARLQRVQGDLCAADTRARVACNAPFDLILSDAAPRTTGNRTVDTSASACLAAGVCAYVNFLSSDGGLVFKVFQGSEHLAILTHLRAHFGAVCSFKPPASRPRSCELYVVARFFRGTCGK.

Residues Gly51, Trp53, Asp71, Asp90, and Asp112 each contribute to the S-adenosyl-L-methionine site. Residue Lys151 is the Proton acceptor of the active site.

The protein belongs to the class I-like SAM-binding methyltransferase superfamily. RNA methyltransferase RlmE family.

It localises to the cytoplasm. It catalyses the reaction uridine(2552) in 23S rRNA + S-adenosyl-L-methionine = 2'-O-methyluridine(2552) in 23S rRNA + S-adenosyl-L-homocysteine + H(+). In terms of biological role, specifically methylates the uridine in position 2552 of 23S rRNA at the 2'-O position of the ribose in the fully assembled 50S ribosomal subunit. The protein is Ribosomal RNA large subunit methyltransferase E of Treponema pallidum (strain Nichols).